A 380-amino-acid chain; its full sequence is 4-hydroxy-3-methylbut-2-en-1-yl diphosphate synthase (flavodoxin) (380 aa).

Residues cysteine 275, cysteine 278, cysteine 310, and glutamate 317 each contribute to the [4Fe-4S] cluster site.

The protein belongs to the IspG family. [4Fe-4S] cluster serves as cofactor.

The enzyme catalyses (2E)-4-hydroxy-3-methylbut-2-enyl diphosphate + oxidized [flavodoxin] + H2O + 2 H(+) = 2-C-methyl-D-erythritol 2,4-cyclic diphosphate + reduced [flavodoxin]. Its pathway is isoprenoid biosynthesis; isopentenyl diphosphate biosynthesis via DXP pathway; isopentenyl diphosphate from 1-deoxy-D-xylulose 5-phosphate: step 5/6. In terms of biological role, converts 2C-methyl-D-erythritol 2,4-cyclodiphosphate (ME-2,4cPP) into 1-hydroxy-2-methyl-2-(E)-butenyl 4-diphosphate. This is 4-hydroxy-3-methylbut-2-en-1-yl diphosphate synthase (flavodoxin) from Hyphomonas neptunium (strain ATCC 15444).